A 183-amino-acid chain; its full sequence is uncharacterized protein (183 aa).

An N-terminal signal peptide occupies residues 1 to 17; sequence MVLFILVLYTCIQDGNG.

This is an uncharacterized protein from Saccharomyces cerevisiae (strain ATCC 204508 / S288c) (Baker's yeast).